We begin with the raw amino-acid sequence, 670 residues long: uncharacterized protein (670 aa).

10 helical membrane passes run 23–42, 47–69, 76–98, 118–140, 153–170, 381–403, 410–432, 437–454, 461–483, and 493–510; these read YALR…YYLN, YWAM…SKSL, LLGA…FFLL, VAYA…VNIT, VCEV…MMIL, QWDA…SAVA, SLLM…GLMV, LWQF…MQLL, FAAL…NPPV, and NLAK…FAIL.

The protein belongs to the aromatic acid exporter ArAE (TC 2.A.85) family.

It localises to the cell membrane. This is an uncharacterized protein from Escherichia coli O157:H7.